The sequence spans 381 residues: Acetylornithine deacetylase (381 aa).

H78 serves as a coordination point for Zn(2+). Residue D80 is part of the active site. D110 contributes to the Zn(2+) binding site. E142 is an active-site residue. Zn(2+) is bound by residues E143, E167, and H353.

Belongs to the peptidase M20A family. ArgE subfamily. As to quaternary structure, homodimer. The cofactor is Zn(2+). It depends on Co(2+) as a cofactor. Glutathione serves as cofactor.

The protein resides in the cytoplasm. The catalysed reaction is N(2)-acetyl-L-ornithine + H2O = L-ornithine + acetate. The protein operates within amino-acid biosynthesis; L-arginine biosynthesis; L-ornithine from N(2)-acetyl-L-ornithine (linear): step 1/1. Functionally, catalyzes the hydrolysis of the amide bond of N(2)-acetylated L-amino acids. Cleaves the acetyl group from N-acetyl-L-ornithine to form L-ornithine, an intermediate in L-arginine biosynthesis pathway, and a branchpoint in the synthesis of polyamines. This Moritella profunda protein is Acetylornithine deacetylase.